Consider the following 601-residue polypeptide: Elongation factor 4 (601 aa).

One can recognise a tr-type G domain in the interval lysine 6–valine 188. GTP contacts are provided by residues aspartate 18–threonine 23 and asparagine 135–aspartate 138.

The protein belongs to the TRAFAC class translation factor GTPase superfamily. Classic translation factor GTPase family. LepA subfamily.

Its subcellular location is the cell inner membrane. The catalysed reaction is GTP + H2O = GDP + phosphate + H(+). Functionally, required for accurate and efficient protein synthesis under certain stress conditions. May act as a fidelity factor of the translation reaction, by catalyzing a one-codon backward translocation of tRNAs on improperly translocated ribosomes. Back-translocation proceeds from a post-translocation (POST) complex to a pre-translocation (PRE) complex, thus giving elongation factor G a second chance to translocate the tRNAs correctly. Binds to ribosomes in a GTP-dependent manner. The protein is Elongation factor 4 of Leptospira biflexa serovar Patoc (strain Patoc 1 / Ames).